Reading from the N-terminus, the 231-residue chain is 5'-methylthioadenosine/S-adenosylhomocysteine nucleosidase (231 aa).

Residue Glu-12 is the Proton acceptor of the active site. Substrate is bound by residues Gly-78, Met-153, and 174 to 175 (ME). Asp-198 (proton donor) is an active-site residue.

Belongs to the PNP/UDP phosphorylase family. MtnN subfamily.

It carries out the reaction S-adenosyl-L-homocysteine + H2O = S-(5-deoxy-D-ribos-5-yl)-L-homocysteine + adenine. The enzyme catalyses S-methyl-5'-thioadenosine + H2O = 5-(methylsulfanyl)-D-ribose + adenine. It catalyses the reaction 5'-deoxyadenosine + H2O = 5-deoxy-D-ribose + adenine. It participates in amino-acid biosynthesis; L-methionine biosynthesis via salvage pathway; S-methyl-5-thio-alpha-D-ribose 1-phosphate from S-methyl-5'-thioadenosine (hydrolase route): step 1/2. Catalyzes the irreversible cleavage of the glycosidic bond in both 5'-methylthioadenosine (MTA) and S-adenosylhomocysteine (SAH/AdoHcy) to adenine and the corresponding thioribose, 5'-methylthioribose and S-ribosylhomocysteine, respectively. Also cleaves 5'-deoxyadenosine, a toxic by-product of radical S-adenosylmethionine (SAM) enzymes, into 5-deoxyribose and adenine. This chain is 5'-methylthioadenosine/S-adenosylhomocysteine nucleosidase, found in Bacillus anthracis (strain A0248).